The primary structure comprises 121 residues: MTELLGSYVPIAIFIGIALVIGLALLVAPFAVAFKAPDSEKLSAYECGFNAFDDARMKFDVRFYLVSILFIIFDLEVAFLFPWAVSFKEMGWFGFWSMMVFLLVLTVGFIYEWKKGALEWN.

Transmembrane regions (helical) follow at residues 11–31, 65–85, and 90–110; these read IAIF…APFA, LVSI…PWAV, and MGWF…VGFI.

Belongs to the complex I subunit 3 family. As to quaternary structure, NDH-1 is composed of 14 different subunits. Subunits NuoA, H, J, K, L, M, N constitute the membrane sector of the complex.

It is found in the cell inner membrane. The catalysed reaction is a quinone + NADH + 5 H(+)(in) = a quinol + NAD(+) + 4 H(+)(out). Functionally, NDH-1 shuttles electrons from NADH, via FMN and iron-sulfur (Fe-S) centers, to quinones in the respiratory chain. The immediate electron acceptor for the enzyme in this species is believed to be ubiquinone. Couples the redox reaction to proton translocation (for every two electrons transferred, four hydrogen ions are translocated across the cytoplasmic membrane), and thus conserves the redox energy in a proton gradient. This is NADH-quinone oxidoreductase subunit A 1 from Rhizobium meliloti (strain 1021) (Ensifer meliloti).